The following is a 403-amino-acid chain: Arginine biosynthesis bifunctional protein ArgJ (403 aa).

Residues 1 to 11 (MVQSVLSSTSH) are compositionally biased toward polar residues. Residues 1 to 21 (MVQSVLSSTSHGSERADMSAA) are disordered. Residues threonine 161, lysine 183, threonine 194, glutamate 273, asparagine 398, and threonine 403 each contribute to the substrate site. Threonine 194 functions as the Nucleophile in the catalytic mechanism.

This sequence belongs to the ArgJ family. In terms of assembly, heterotetramer of two alpha and two beta chains.

It is found in the cytoplasm. It carries out the reaction N(2)-acetyl-L-ornithine + L-glutamate = N-acetyl-L-glutamate + L-ornithine. The enzyme catalyses L-glutamate + acetyl-CoA = N-acetyl-L-glutamate + CoA + H(+). It functions in the pathway amino-acid biosynthesis; L-arginine biosynthesis; L-ornithine and N-acetyl-L-glutamate from L-glutamate and N(2)-acetyl-L-ornithine (cyclic): step 1/1. It participates in amino-acid biosynthesis; L-arginine biosynthesis; N(2)-acetyl-L-ornithine from L-glutamate: step 1/4. Catalyzes two activities which are involved in the cyclic version of arginine biosynthesis: the synthesis of N-acetylglutamate from glutamate and acetyl-CoA as the acetyl donor, and of ornithine by transacetylation between N(2)-acetylornithine and glutamate. The polypeptide is Arginine biosynthesis bifunctional protein ArgJ (Rhodococcoides fascians (Rhodococcus fascians)).